The following is a 246-amino-acid chain: Envelope glycoprotein L (246 aa).

The first 19 residues, 1-19 (MKTNIFFIFLISILNQIYA), serve as a signal peptide directing secretion. One can recognise a gL betaherpesvirus-type domain in the interval 29-235 (LEQECIKNIL…EKYNEVLPFR (207 aa)). Cysteine 134 and cysteine 139 are oxidised to a cystine.

It belongs to the herpesviridae glycoprotein L (gL) family. Betaherpesvirinae gL subfamily. Interacts with glycoprotein H (gH); this interaction is necessary for the correct processing and cell surface expression of gH.

The protein resides in the virion membrane. It localises to the host cell membrane. It is found in the host Golgi apparatus. Its subcellular location is the host trans-Golgi network. Its function is as follows. The heterodimer glycoprotein H-glycoprotein L is required for the fusion of viral and plasma membranes leading to virus entry into the host cell. Acts as a functional inhibitor of gH and maintains gH in an inhibited form. Upon binding to host integrins, gL dissociates from gH leading to activation of the viral fusion glycoproteins gB and gH. This chain is Envelope glycoprotein L, found in Homo sapiens (Human).